A 420-amino-acid polypeptide reads, in one-letter code: Phosphoglycerate kinase (420 aa).

Residues valine 26, aspartate 27, tyrosine 28, asparagine 29, glutamine 42, arginine 43, serine 66, histidine 67, glycine 69, arginine 70, leucine 125, arginine 126, histidine 173, and arginine 174 each coordinate (2R)-3-phosphoglycerate. Tyrosine 199 carries the post-translational modification Phosphotyrosine. Serine 206 is subject to Phosphoserine. Residues 209–228 (KPFLAILGGAKVSDKIKLIE) are calmodulin binding. Glycine 217 contacts ADP. Glycine 217 provides a ligand contact to CDP. Residues alanine 218 and lysine 219 each contribute to the AMP site. An ATP-binding site is contributed by alanine 218. Residue alanine 218 coordinates Mg(2+). Aspartate 222 contributes to the CDP binding site. A Mg(2+)-binding site is contributed by aspartate 222. AMP is bound at residue lysine 223. Lysine 223 contacts ATP. Glycine 241 is an ADP binding site. CDP is bound at residue glycine 241. Positions 242 and 316 each coordinate AMP. Residues glycine 242 and glycine 316 each contribute to the ATP site. Glycine 341 and phenylalanine 346 together coordinate CDP. Phenylalanine 346 contributes to the ADP binding site. Glutamate 347 serves as a coordination point for AMP. The ATP site is built by glutamate 347, aspartate 378, and threonine 379. A Mg(2+)-binding site is contributed by aspartate 378. Serine 393 carries the post-translational modification Phosphoserine.

This sequence belongs to the phosphoglycerate kinase family. Monomer. Interacts with calmodulin in the presence of Ca(2+). The cofactor is Mg(2+).

The protein localises to the cytoplasm. It catalyses the reaction (2R)-3-phosphoglycerate + ATP = (2R)-3-phospho-glyceroyl phosphate + ADP. It participates in carbohydrate degradation; glycolysis; pyruvate from D-glyceraldehyde 3-phosphate: step 2/5. The protein is Phosphoglycerate kinase of Dictyostelium discoideum (Social amoeba).